A 562-amino-acid chain; its full sequence is Beta-hexosaminidase (562 aa).

Residues 1 to 22 form the signal peptide; the sequence is MVLDKMIIFHLLLWLCNVVVHA. Residues Asn38, Asn52, Asn111, Asn337, Asn382, Asn396, and Asn463 are each glycosylated (N-linked (GlcNAc...) asparagine).

This sequence belongs to the glycosyl hydrolase 20 family.

It catalyses the reaction Hydrolysis of terminal non-reducing N-acetyl-D-hexosamine residues in N-acetyl-beta-D-hexosaminides.. Functionally, has a broad substrate specificity. The chain is Beta-hexosaminidase (HEX1) from Candida albicans (Yeast).